The chain runs to 218 residues: Elongation factor Ts (218 aa).

Residues 82–85 (TDFV) are involved in Mg(2+) ion dislocation from EF-Tu.

It belongs to the EF-Ts family.

Its subcellular location is the cytoplasm. Functionally, associates with the EF-Tu.GDP complex and induces the exchange of GDP to GTP. It remains bound to the aminoacyl-tRNA.EF-Tu.GTP complex up to the GTP hydrolysis stage on the ribosome. The polypeptide is Elongation factor Ts (Prochlorococcus marinus (strain MIT 9303)).